The following is a 240-amino-acid chain: MSELPRGSTIRKDAGLYGYERALRRHGIEPIAGVDEAGRGACAGPLVAGAAILPPGKAGIVPGLADSKLLTERARERCYEQIVRRAVSWSVVVVSHEECDRLGMHVANVEALRRAVALLDLPPAYVLTDGFPVDGLGVPGLAVWKGDRVAACISAASVLAKVTRDRIMTELDASWPAYDFKTHKGYITEVHSAALTAHGPSPIHRMRFVNVRRAAGLEPLDPVQNGEEAVELVEVTEGTR.

Positions 29–220 (EPIAGVDEAG…VRRAAGLEPL (192 aa)) constitute an RNase H type-2 domain. Positions 35, 36, and 129 each coordinate a divalent metal cation.

It belongs to the RNase HII family. Requires Mn(2+) as cofactor. Mg(2+) is required as a cofactor.

The protein resides in the cytoplasm. It carries out the reaction Endonucleolytic cleavage to 5'-phosphomonoester.. In terms of biological role, endonuclease that specifically degrades the RNA of RNA-DNA hybrids. The protein is Ribonuclease HII of Nocardioides sp. (strain ATCC BAA-499 / JS614).